A 499-amino-acid polypeptide reads, in one-letter code: Cobyric acid synthase (499 aa).

In terms of domain architecture, GATase cobBQ-type spans Arg266 to Trp449. Catalysis depends on Cys344, which acts as the Nucleophile. The active site involves His441.

It belongs to the CobB/CobQ family. CobQ subfamily.

Its pathway is cofactor biosynthesis; adenosylcobalamin biosynthesis. Catalyzes amidations at positions B, D, E, and G on adenosylcobyrinic A,C-diamide. NH(2) groups are provided by glutamine, and one molecule of ATP is hydrogenolyzed for each amidation. This is Cobyric acid synthase from Synechococcus sp. (strain JA-2-3B'a(2-13)) (Cyanobacteria bacterium Yellowstone B-Prime).